The chain runs to 238 residues: Ribonuclease PH (238 aa).

Phosphate-binding positions include arginine 86 and 124–126; that span reads GTR.

It belongs to the RNase PH family. As to quaternary structure, homohexameric ring arranged as a trimer of dimers.

The catalysed reaction is tRNA(n+1) + phosphate = tRNA(n) + a ribonucleoside 5'-diphosphate. Functionally, phosphorolytic 3'-5' exoribonuclease that plays an important role in tRNA 3'-end maturation. Removes nucleotide residues following the 3'-CCA terminus of tRNAs; can also add nucleotides to the ends of RNA molecules by using nucleoside diphosphates as substrates, but this may not be physiologically important. Probably plays a role in initiation of 16S rRNA degradation (leading to ribosome degradation) during starvation. This chain is Ribonuclease PH, found in Hahella chejuensis (strain KCTC 2396).